A 303-amino-acid polypeptide reads, in one-letter code: Probable cell division protein WhiA (303 aa).

The H-T-H motif DNA-binding region spans 272–303 (SIQQVADALEFPITKSGVNHRLRKINKIADDL).

This sequence belongs to the WhiA family.

Its function is as follows. Involved in cell division and chromosome segregation. In Streptococcus pyogenes serotype M3 (strain ATCC BAA-595 / MGAS315), this protein is Probable cell division protein WhiA.